Reading from the N-terminus, the 317-residue chain is Metaxin-1 (317 aa).

Residues lysine 38, lysine 41, and lysine 78 each participate in a glycyl lysine isopeptide (Lys-Gly) (interchain with G-Cter in ubiquitin) cross-link. Residues 164 to 184 (EELEKELYREARECLTLLSQR) form a helical membrane-spanning segment.

Belongs to the metaxin family. In terms of assembly, interacts with MTX2/metaxin-2. Associates with the mitochondrial contact site and cristae organizing system (MICOS) complex, composed of at least MICOS10/MIC10, CHCHD3/MIC19, CHCHD6/MIC25, APOOL/MIC27, IMMT/MIC60, APOO/MIC23/MIC26 and QIL1/MIC13. This complex was also known under the names MINOS or MitOS complex. The MICOS complex associates with mitochondrial outer membrane proteins SAMM50, MTX1 and MTX2 (together described as components of the mitochondrial outer membrane sorting assembly machinery (SAM) complex) and DNAJC11, mitochondrial inner membrane protein TMEM11 and with HSPA9. The MICOS and SAM complexes together with DNAJC11 are part of a large protein complex spanning both membranes termed the mitochondrial intermembrane space bridging (MIB) complex. Interacts with ARMC1. Ubiquitinated by PRKN during mitophagy, leading to its degradation and enhancement of mitophagy. Deubiquitinated by USP30.

The protein resides in the mitochondrion outer membrane. In terms of biological role, involved in transport of proteins into the mitochondrion. Essential for embryonic development. The chain is Metaxin-1 (MTX1) from Macaca fascicularis (Crab-eating macaque).